An 81-amino-acid chain; its full sequence is ATP synthase subunit c (81 aa).

Transmembrane regions (helical) follow at residues 7–27 (AASVLSAALAIGLGSLGPGLG) and 57–77 (LAFMEALTIYGLVVALVLLFA).

It belongs to the ATPase C chain family. F-type ATPases have 2 components, F(1) - the catalytic core - and F(0) - the membrane proton channel. F(1) has five subunits: alpha(3), beta(3), gamma(1), delta(1), epsilon(1). F(0) has four main subunits: a(1), b(1), b'(1) and c(10-14). The alpha and beta chains form an alternating ring which encloses part of the gamma chain. F(1) is attached to F(0) by a central stalk formed by the gamma and epsilon chains, while a peripheral stalk is formed by the delta, b and b' chains.

The protein localises to the cellular thylakoid membrane. In terms of biological role, f(1)F(0) ATP synthase produces ATP from ADP in the presence of a proton or sodium gradient. F-type ATPases consist of two structural domains, F(1) containing the extramembraneous catalytic core and F(0) containing the membrane proton channel, linked together by a central stalk and a peripheral stalk. During catalysis, ATP synthesis in the catalytic domain of F(1) is coupled via a rotary mechanism of the central stalk subunits to proton translocation. Its function is as follows. Key component of the F(0) channel; it plays a direct role in translocation across the membrane. A homomeric c-ring of between 10-14 subunits forms the central stalk rotor element with the F(1) delta and epsilon subunits. The polypeptide is ATP synthase subunit c (Synechococcus sp. (strain JA-3-3Ab) (Cyanobacteria bacterium Yellowstone A-Prime)).